A 152-amino-acid chain; its full sequence is D-aminoacyl-tRNA deacylase (152 aa).

Residues 142 to 143 carry the Gly-cisPro motif, important for rejection of L-amino acids motif; that stretch reads GP.

It belongs to the DTD family. In terms of assembly, homodimer.

The protein localises to the cytoplasm. It carries out the reaction glycyl-tRNA(Ala) + H2O = tRNA(Ala) + glycine + H(+). The enzyme catalyses a D-aminoacyl-tRNA + H2O = a tRNA + a D-alpha-amino acid + H(+). Functionally, an aminoacyl-tRNA editing enzyme that deacylates mischarged D-aminoacyl-tRNAs. Also deacylates mischarged glycyl-tRNA(Ala), protecting cells against glycine mischarging by AlaRS. Acts via tRNA-based rather than protein-based catalysis; rejects L-amino acids rather than detecting D-amino acids in the active site. By recycling D-aminoacyl-tRNA to D-amino acids and free tRNA molecules, this enzyme counteracts the toxicity associated with the formation of D-aminoacyl-tRNA entities in vivo and helps enforce protein L-homochirality. The polypeptide is D-aminoacyl-tRNA deacylase (Burkholderia mallei (strain NCTC 10247)).